A 320-amino-acid chain; its full sequence is GDP-L-fucose synthase (320 aa).

NADP(+) is bound at residue 14–20 (GGSGLVG). Catalysis depends on Tyr142, which acts as the Proton donor/acceptor. NADP(+) is bound by residues Lys146, 169-172 (PTNI), and His185. Substrate is bound by residues Lys193, Arg214, and Asp276.

This sequence belongs to the NAD(P)-dependent epimerase/dehydratase family. Fucose synthase subfamily.

It carries out the reaction GDP-beta-L-fucose + NADP(+) = GDP-4-dehydro-alpha-D-rhamnose + NADPH + H(+). The protein operates within nucleotide-sugar biosynthesis; GDP-L-fucose biosynthesis via de novo pathway; GDP-L-fucose from GDP-alpha-D-mannose: step 2/2. In terms of biological role, catalyzes the two-step NADP-dependent conversion of GDP-4-dehydro-6-deoxy-D-mannose to GDP-fucose, involving an epimerase and a reductase reaction. This Dictyostelium discoideum (Social amoeba) protein is GDP-L-fucose synthase (ger).